A 226-amino-acid polypeptide reads, in one-letter code: N-(5'-phosphoribosyl)anthranilate isomerase (226 aa).

Belongs to the TrpF family.

The enzyme catalyses N-(5-phospho-beta-D-ribosyl)anthranilate = 1-(2-carboxyphenylamino)-1-deoxy-D-ribulose 5-phosphate. Its pathway is amino-acid biosynthesis; L-tryptophan biosynthesis; L-tryptophan from chorismate: step 3/5. This chain is N-(5'-phosphoribosyl)anthranilate isomerase (TRP1), found in Saccharomyces kudriavzevii (strain ATCC MYA-4449 / AS 2.2408 / CBS 8840 / NBRC 1802 / NCYC 2889) (Yeast).